A 223-amino-acid chain; its full sequence is Putative NAD(P)H nitroreductase SAUSA300_2462 (223 aa).

The protein belongs to the nitroreductase family. Requires FMN as cofactor.

The protein is Putative NAD(P)H nitroreductase SAUSA300_2462 of Staphylococcus aureus (strain USA300).